The chain runs to 189 residues: Ribosome-recycling factor (189 aa).

The protein belongs to the RRF family.

It is found in the cytoplasm. Responsible for the release of ribosomes from messenger RNA at the termination of protein biosynthesis. May increase the efficiency of translation by recycling ribosomes from one round of translation to another. The polypeptide is Ribosome-recycling factor (Salinibacter ruber (strain DSM 13855 / M31)).